Here is a 792-residue protein sequence, read N- to C-terminus: 5-methyltetrahydropteroyltriglutamate--homocysteine methyltransferase (792 aa).

5-methyltetrahydropteroyltri-L-glutamate is bound by residues 16–19 (RELK) and Lys-112. L-homocysteine is bound by residues 432–434 (IGS) and Glu-485. L-methionine-binding positions include 432–434 (IGS) and Glu-485. 5-methyltetrahydropteroyltri-L-glutamate-binding positions include 516–517 (RC) and Trp-562. Asp-600 contacts L-homocysteine. Asp-600 contributes to the L-methionine binding site. Residue Glu-606 participates in 5-methyltetrahydropteroyltri-L-glutamate binding. Zn(2+) contacts are provided by His-642, Cys-644, and Glu-666. The Proton donor role is filled by His-695. Cys-727 contributes to the Zn(2+) binding site.

It belongs to the vitamin-B12 independent methionine synthase family. Requires Zn(2+) as cofactor.

It catalyses the reaction 5-methyltetrahydropteroyltri-L-glutamate + L-homocysteine = tetrahydropteroyltri-L-glutamate + L-methionine. It functions in the pathway amino-acid biosynthesis; L-methionine biosynthesis via de novo pathway; L-methionine from L-homocysteine (MetE route): step 1/1. Its function is as follows. Catalyzes the transfer of a methyl group from 5-methyltetrahydrofolate to homocysteine resulting in methionine formation. This is 5-methyltetrahydropteroyltriglutamate--homocysteine methyltransferase from Cupriavidus necator (strain ATCC 17699 / DSM 428 / KCTC 22496 / NCIMB 10442 / H16 / Stanier 337) (Ralstonia eutropha).